We begin with the raw amino-acid sequence, 468 residues long: 3-isopropylmalate dehydratase large subunit (468 aa).

[4Fe-4S] cluster-binding residues include Cys346, Cys406, and Cys409.

It belongs to the aconitase/IPM isomerase family. LeuC type 1 subfamily. As to quaternary structure, heterodimer of LeuC and LeuD. It depends on [4Fe-4S] cluster as a cofactor.

The catalysed reaction is (2R,3S)-3-isopropylmalate = (2S)-2-isopropylmalate. The protein operates within amino-acid biosynthesis; L-leucine biosynthesis; L-leucine from 3-methyl-2-oxobutanoate: step 2/4. Its function is as follows. Catalyzes the isomerization between 2-isopropylmalate and 3-isopropylmalate, via the formation of 2-isopropylmaleate. This is 3-isopropylmalate dehydratase large subunit from Pseudoalteromonas atlantica (strain T6c / ATCC BAA-1087).